The sequence spans 152 residues: UPF0756 membrane protein Helmi_09930 (152 aa).

A run of 5 helical transmembrane segments spans residues 6–26, 52–72, 75–95, 111–131, and 132–152; these read VLLILILLLGVIARSPMTALA, TGLIMLTLAMLAPFATGKVGL, VLLSFASLPGIIAVIGGVLAT, IIVGMIVGSLLGIVLFGGIPV, and GPLMAGGLTALILQIYGWLSK.

The protein belongs to the UPF0756 family.

The protein resides in the cell membrane. This Heliobacterium modesticaldum (strain ATCC 51547 / Ice1) protein is UPF0756 membrane protein Helmi_09930.